The primary structure comprises 453 residues: 13-hydroxylupanine O-tigloyltransferase (453 aa).

Residues H166 and D385 each act as proton acceptor in the active site.

The protein belongs to the plant acyltransferase family. Monomer. As to expression, expressed in roots and hypocotyls. Detected in seeds, leaves and cotyledons, but not in young developing leaves.

It catalyses the reaction 13-hydroxylupanine + (2E)-2-methylbut-2-enoyl-CoA = 13-(2-methylcrotonoyloxy)lupanine + CoA. Inhibited by N-ethylmaleimide, p-chloromercuribenzoic acid and diethylpyrocarbonate (DEPC). In terms of biological role, acyl-CoA-dependent acyltransferase involved in the synthesis of lupanine alkaloids. Can use both (-)-13alpha-hydroxymultiflorine and (+)-13alpha-hydroxylupanine as substrates. Lower activity with (-)-3beta, 13alpha-dihydroxylupanine, but no activity with (+)-epilupinine and (-)-lupinine as substrates. Tigloyl-CoA, benzoyl-CoA and, more slowly, acetyl-CoA, propionyl-CoA and 2-butenoyl-CoA can act as acyl donors. The chain is 13-hydroxylupanine O-tigloyltransferase (HMT/HLT) from Lupinus albus (White lupine).